We begin with the raw amino-acid sequence, 189 residues long: UPF0301 protein PST_3956 (189 aa).

This sequence belongs to the UPF0301 (AlgH) family.

The polypeptide is UPF0301 protein PST_3956 (Stutzerimonas stutzeri (strain A1501) (Pseudomonas stutzeri)).